The primary structure comprises 216 residues: Cytochrome c biogenesis ATP-binding export protein CcmA (216 aa).

Positions I5–V216 constitute an ABC transporter domain. Residue G43–T50 participates in ATP binding.

Belongs to the ABC transporter superfamily. CcmA exporter (TC 3.A.1.107) family. In terms of assembly, the complex is composed of two ATP-binding proteins (CcmA) and two transmembrane proteins (CcmB).

It localises to the cell inner membrane. It carries out the reaction heme b(in) + ATP + H2O = heme b(out) + ADP + phosphate + H(+). Functionally, part of the ABC transporter complex CcmAB involved in the biogenesis of c-type cytochromes; once thought to export heme, this seems not to be the case, but its exact role is uncertain. Responsible for energy coupling to the transport system. This is Cytochrome c biogenesis ATP-binding export protein CcmA from Shewanella oneidensis (strain ATCC 700550 / JCM 31522 / CIP 106686 / LMG 19005 / NCIMB 14063 / MR-1).